Consider the following 537-residue polypeptide: Glucans biosynthesis protein D (537 aa).

Positions 1–30 form a signal peptide, tat-type signal; it reads MLMYRRDFLKSVTAAWVAFGLPNPLGGAFA.

Belongs to the OpgD/OpgG family. Predicted to be exported by the Tat system. The position of the signal peptide cleavage has not been experimentally proven.

It is found in the periplasm. The protein operates within glycan metabolism; osmoregulated periplasmic glucan (OPG) biosynthesis. Its function is as follows. Probably involved in the control of the structural glucose backbone of osmoregulated periplasmic glucans (OPGs). The polypeptide is Glucans biosynthesis protein D (Xylella fastidiosa (strain M12)).